Consider the following 173-residue polypeptide: CKLF-like MARVEL transmembrane domain-containing protein 8 (173 aa).

The region spanning 36 to 168 (FLRTLPGFLI…NTYFSFIAWR (133 aa)) is the MARVEL domain. Helical transmembrane passes span 40–60 (LPGF…TLIA), 70–90 (FGWV…FLII), 105–125 (TTVG…AAVV), and 147–167 (FFAF…FIAW).

This sequence belongs to the chemokine-like factor family. In terms of tissue distribution, highly expressed in liver and pancreas.

The protein localises to the membrane. It localises to the cytoplasm. The protein resides in the nucleus. This is CKLF-like MARVEL transmembrane domain-containing protein 8 (CMTM8) from Homo sapiens (Human).